An 80-amino-acid chain; its full sequence is Small ribosomal subunit protein bS16 (80 aa).

It belongs to the bacterial ribosomal protein bS16 family.

This Wigglesworthia glossinidia brevipalpis protein is Small ribosomal subunit protein bS16.